Reading from the N-terminus, the 242-residue chain is Methylthioribulose-1-phosphate dehydratase (242 aa).

Cys-97 serves as a coordination point for substrate. Residues His-115 and His-117 each coordinate Zn(2+). The active-site Proton donor/acceptor is the Glu-139. Zn(2+) is bound at residue His-195.

Belongs to the aldolase class II family. MtnB subfamily. Homotetramer. Interacts with APAF1. May interact with CASP1. The cofactor is Zn(2+).

Its subcellular location is the cytoplasm. The catalysed reaction is 5-(methylsulfanyl)-D-ribulose 1-phosphate = 5-methylsulfanyl-2,3-dioxopentyl phosphate + H2O. It participates in amino-acid biosynthesis; L-methionine biosynthesis via salvage pathway; L-methionine from S-methyl-5-thio-alpha-D-ribose 1-phosphate: step 2/6. Its function is as follows. Catalyzes the dehydration of methylthioribulose-1-phosphate (MTRu-1-P) into 2,3-diketo-5-methylthiopentyl-1-phosphate (DK-MTP-1-P). Functions in the methionine salvage pathway, which plays a key role in cancer, apoptosis, microbial proliferation and inflammation. May inhibit the CASP1-related inflammatory response (pyroptosis), the CASP9-dependent apoptotic pathway and the cytochrome c-dependent and APAF1-mediated cell death. This chain is Methylthioribulose-1-phosphate dehydratase, found in Bos taurus (Bovine).